The sequence spans 7839 residues: Nonribosomal peptide synthetase GRA1 (7839 aa).

The span at 1 to 23 (MALLNGKSTLPNGHNSSIESPNG) shows a compositional bias: polar residues. Residues 1 to 26 (MALLNGKSTLPNGHNSSIESPNGYTE) are disordered. Residues 264-650 (LASPNSCAVH…LGRIDDQVKI (387 aa)) form an adenylation 1 region. The 74-residue stretch at 793–866 (SAEALVLRQL…LQAEMSEKKK (74 aa)) folds into the Carrier 1 domain. Residue serine 827 is modified to O-(pantetheine 4'-phosphoryl)serine. The condensation 1 stretch occupies residues 916–1332 (DIYPASPLQE…ILSPSDVAQI (417 aa)). Residues 1351-1742 (FFTQVKRSPD…QRKDAQLKIR (392 aa)) are adenylation 2. Residues 1880–1957 (ELETEAERTM…AMSRQATVSD (78 aa)) form the Carrier 2 domain. Serine 1918 is subject to O-(pantetheine 4'-phosphoryl)serine. The segment at 1997–2413 (DLYPCTPFQE…LISPSDMETI (417 aa)) is condensation 2. An adenylation 3 region spans residues 2432-2828 (FDRRLSQKHS…GRRDTQLKIR (397 aa)). In terms of domain architecture, Carrier 3 spans 2963–3040 (IPTTQMEWNL…DLAQAIVLDT (78 aa)). Serine 3001 bears the O-(pantetheine 4'-phosphoryl)serine mark. Residues 3084–3496 (DIYPCTPLQD…QVDLISDSDH (413 aa)) are condensation 3. The interval 3520 to 3923 (RLAVSNPDAE…GRRDSQVKLR (404 aa)) is adenylation 4. A Carrier 4 domain is found at 4057-4134 (RPLTEREKDL…DMAAMTTSLS (78 aa)). At serine 4095 the chain carries O-(pantetheine 4'-phosphoryl)serine. Residues 4234-4569 (NLEEFVGRQS…MMNPDDAEEI (336 aa)) are condensation 4. Residues 4591 to 4982 (HSKGCPDRIA…VSRKDTQVKF (392 aa)) form an adenylation 5 region. The 77-residue stretch at 5113-5189 (ALSSDEESQL…DMALCMTSAQ (77 aa)) folds into the Carrier 5 domain. Serine 5150 bears the O-(pantetheine 4'-phosphoryl)serine mark. The interval 5224-5653 (EDIYPCSALQ…VSPSDQAEIL (430 aa)) is condensation 5. The interval 5671–6069 (FESRARLQPS…GRRDTQVKLR (399 aa)) is adenylation 6. A Carrier 6 domain is found at 6207-6282 (FPSSLAEQQM…HMAAIATTFT (76 aa)). Serine 6243 bears the O-(pantetheine 4'-phosphoryl)serine mark. A condensation 6 region spans residues 6321 to 6730 (QDIYPCSALQ…RLADMDLTGP (410 aa)). Positions 6756 to 7147 (EQRVKSQPDS…LGRKDSQIKL (392 aa)) are adenylation 7. One can recognise a Carrier 7 domain in the interval 7290–7366 (KAATPNEKTL…DLARVSRQSI (77 aa)). Position 7327 is an O-(pantetheine 4'-phosphoryl)serine (serine 7327). A condensation7 region spans residues 7404–7704 (HDIYPCTQVQ…LDYAKKRASS (301 aa)).

This sequence belongs to the NRP synthetase family.

The protein operates within mycotoxin biosynthesis. Its function is as follows. Nonribosomal peptide synthetase; part of the gene cluster that mediates the biosynthesis of gramillins A and B, bicyclic lipopeptides that induce cell death in maize leaves but not in wheat leaves. The nonribosomal peptide synthetase GRA1 incorporates respectively a glutamic adic (Glu), a leucine (Leu), a serine (Ser), a hydroxyglutamine (HOGln), a 2-amino decanoic acid, and 2 cysteins (CysB and CysA). The biosynthesis of 2-amino decanoic acid incorporated in gramillins could be initiated by a fatty acid synthase composed of the alpha and beta subunits FGSG_00036 and FGSG_11656. The cytochrome P450 monooxygenase FGSG_15680 could hydroxylate the fatty acid chain. Subsequent oxidation to the ketone by the oxidoreductase FGSG_00048 and transamination by aminotransferase FGSG_00049 could form 2-amino-decanoic acid. On the other hand, FGSG_15680 could also be responsible for the HO-modified glutamine at the gamma-position. Whether hydroxylation occurs on the fully assembled product or on the Gln residue prior to assembly into the gramillins requires further proof. The thioredoxin FGSG_00043 could also be required for the disulfide-bond formation between CysA and CysB. The specific involvement of the remaining proteins from the cluster is more difficult to discern, but could have broader regulatory (FGSG_00040 and FGSG_11657) or enzymatic functions (FGSG_00044 and FGSG_00045). The final C-domain of GRA1 does not possess the expected sequence of a termination CT domain, often implicated in macrocyclization and release of a cyclopeptidein fungal NRPs; and the thioesterase FGSG_00047 may act in concert with the terminal C-domain of GRA1 to catalyze the formation of the macrocyclic anhydride and release of the products. The protein is Nonribosomal peptide synthetase GRA1 of Gibberella zeae (strain ATCC MYA-4620 / CBS 123657 / FGSC 9075 / NRRL 31084 / PH-1) (Wheat head blight fungus).